Consider the following 202-residue polypeptide: Transmembrane 4 L6 family member 1 (202 aa).

Over 1–9 (MCYVKCARY) the chain is Cytoplasmic. Residues 10–30 (IGYSLVWAAVFCIVANALLYF) traverse the membrane as a helical segment. The Extracellular portion of the chain corresponds to 31 to 49 (PNGETKYATEDHLSRFVWY). A helical transmembrane segment spans residues 50–70 (FAGIVGGGLLMLLPAFVFIGM). The Cytoplasmic segment spans residues 71 to 93 (DEEDCCGCCGYENYGKRCSMLSS). Residues 94–114 (VLAALIGIVGSAYCVIVASLG) traverse the membrane as a helical segment. The Extracellular portion of the chain corresponds to 115–161 (LAEGPKCSDAHGVWNYTFASTEGQYLLNSSMWSKCYEPKHIVEWHVT). Asn-129 and Asn-142 each carry an N-linked (GlcNAc...) asparagine glycan. Residues 162–182 (LFSILLAFAAVEFILCLIQVI) traverse the membrane as a helical segment. Residues 183–202 (NGMLGGLCGYCCSRQQQYNC) are Cytoplasmic-facing.

Belongs to the L6 tetraspanin family. In terms of assembly, present in high molecular weight complexes in tumor cells. Interacts with SDCBP2. As to expression, highly expressed in skin and lung. Moderately expressed in lymph nodes and kidneys. Also present in thymic stroma and fibroblasts.

Its subcellular location is the membrane. The sequence is that of Transmembrane 4 L6 family member 1 (Tm4sf1) from Mus musculus (Mouse).